The following is a 1330-amino-acid chain: Ubinuclein-2 (1330 aa).

The segment at 1 to 133 (MAEPRRVAFI…PRETVRLELV (133 aa)) is disordered. Residue Ser-13 is modified to Phosphoserine. 2 stretches are compositionally biased toward basic and acidic residues: residues 16–37 (RRREAEFPGTEREPEYPREPPR) and 67–79 (PREKPLPQREVSR). The segment covering 93–111 (PEPPPPPLPQLHLQPPPPR) has biased composition (pro residues). A compositionally biased stretch (basic and acidic residues) spans 123–133 (PPRETVRLELV). A Phosphothreonine modification is found at Thr-244. The interval 249-304 (QASDTEEDDTTDNQKHKPPKIPKIKEDDIEMKKRKRKEEGEKEKKPRKKVPKQLGV) is disordered. At Ser-251 the chain carries Phosphoserine. The residue at position 253 (Thr-253) is a Phosphothreonine. Lys-273 is covalently cross-linked (Glycyl lysine isopeptide (Lys-Gly) (interchain with G-Cter in SUMO2)). Ser-312 is subject to Phosphoserine. A disordered region spans residues 336–356 (KDALKKESNPKTPLNFSTSSL). The segment covering 345-356 (PKTPLNFSTSSL) has biased composition (polar residues). Ser-417, Ser-420, Ser-423, and Ser-585 each carry phosphoserine. 7 disordered regions span residues 574 to 597 (FQTDEEREKNGSEEDDEEKPGKRV), 672 to 730 (LTSA…STPV), 802 to 833 (PKKLDSTQTAHSSSLIAGHTGPVPKKPQDLAH), 864 to 913 (GLQR…VTKV), 938 to 988 (PVVK…SRTV), 1017 to 1201 (MAAS…GSSV), and 1308 to 1330 (HVQQTFNDGGQSKGDTKLPRKSQ). Basic and acidic residues-rich tracts occupy residues 575-585 (QTDEEREKNGS) and 688-699 (KVKECSPKKDQK). Low complexity predominate over residues 701–730 (PASSVASVGGPSTSSSTSAVASTSSGSTPV). Positions 807–816 (STQTAHSSSL) are enriched in polar residues. Positions 864 to 895 (GLQRSSQIHASSSSQTHVSSSSQAQVAASSHT) are enriched in low complexity. 2 stretches are compositionally biased toward polar residues: residues 896 to 913 (LGTSEAQDASPLTQVTKV) and 938 to 956 (PVVKLSNNPQLSCSSPLTK). A compositionally biased stretch (low complexity) spans 1017-1029 (MAASPKLASSPKP). Positions 1030-1044 (ATSPKPLPSPKPSAS) are enriched in pro residues. Low complexity-rich tracts occupy residues 1045–1054 (PKPSQSAKPS) and 1061–1079 (SKSNPTPKPTVSPSSSSPN). Lys-1052 carries the N6-acetyllysine modification. 3 stretches are compositionally biased toward polar residues: residues 1082-1148 (VAQS…NSLS), 1158-1169 (RGSNLNSSGANR), and 1308-1317 (HVQQTFNDGG). Ser-1107 bears the Phosphoserine mark. N6-acetyllysine is present on Lys-1132. A compositionally biased stretch (basic and acidic residues) spans 1321 to 1330 (GDTKLPRKSQ).

Belongs to the ubinuclein family.

This is Ubinuclein-2 (UBN2) from Bos taurus (Bovine).